Reading from the N-terminus, the 341-residue chain is HTH-type transcriptional repressor PurR (341 aa).

An HTH lacI-type domain is found at 2 to 56 (ATIKDVAKRANVSTTTVSHVINKTRFVAEETRNAVWAAIKELHYSPSAVARSLKV). The H-T-H motif DNA-binding region spans 4–23 (IKDVAKRANVSTTTVSHVIN). The DNA-binding element occupies 48 to 56 (SAVARSLKV). 5 residues coordinate hypoxanthine: Tyr73, Arg190, Thr192, Phe221, and Asp275.

Homodimer.

It participates in purine metabolism; purine nucleotide biosynthesis [regulation]. Functionally, is the main repressor of the genes involved in the de novo synthesis of purine nucleotides, regulating purB, purC, purEK, purF, purHD, purL, purMN and guaBA expression. PurR is allosterically activated to bind its cognate DNA by binding the purine corepressors, hypoxanthine or guanine, thereby effecting transcription repression. The polypeptide is HTH-type transcriptional repressor PurR (Salmonella typhi).